We begin with the raw amino-acid sequence, 167 residues long: Shikimate kinase (167 aa).

12-17 (GSGKTT) provides a ligand contact to ATP. Thr16 is a binding site for Mg(2+). Asp34, Arg58, and Gly80 together coordinate substrate. Arg117 contacts ATP. Residue Arg135 coordinates substrate. Residue Arg152 participates in ATP binding.

Belongs to the shikimate kinase family. In terms of assembly, monomer. It depends on Mg(2+) as a cofactor.

The protein resides in the cytoplasm. The enzyme catalyses shikimate + ATP = 3-phosphoshikimate + ADP + H(+). The protein operates within metabolic intermediate biosynthesis; chorismate biosynthesis; chorismate from D-erythrose 4-phosphate and phosphoenolpyruvate: step 5/7. Functionally, catalyzes the specific phosphorylation of the 3-hydroxyl group of shikimic acid using ATP as a cosubstrate. The sequence is that of Shikimate kinase from Salinispora arenicola (strain CNS-205).